A 95-amino-acid chain; its full sequence is Protein NCBP2AS2 homolog (95 aa).

The polypeptide is Protein NCBP2AS2 homolog (Ixodes scapularis (Black-legged tick)).